We begin with the raw amino-acid sequence, 1033 residues long: Potassium-transporting ATPase alpha chain 2 (1033 aa).

Topologically, residues 1-96 (MRRKTLEIYS…NALSPPKQTP (96 aa)) are cytoplasmic. A helical transmembrane segment spans residues 97–117 (EIIKFLKQMIGGFSILLWVGA). Residues 118-140 (ILCWIAYGIQYASNQSGSLDNVY) lie on the Lumenal side of the membrane. A helical membrane pass occupies residues 141–161 (LGVVLALVVILTGIFAYYQEA). Over 162-297 (KSTNIMSSFS…NEKTPIATEI (136 aa)) the chain is Cytoplasmic. Residues 298 to 317 (EHFVHIVAGVAVSIGILFFI) traverse the membrane as a helical segment. Residues 318–329 (IAVSLKYRVLDS) lie on the Lumenal side of the membrane. The helical transmembrane segment at 330–347 (IIFLIGIIVANVPEGLLA) threads the bilayer. Residues 348 to 781 (TVTVTLSLTA…EEGRLIFDNL (434 aa)) lie on the Cytoplasmic side of the membrane. Residue D385 is the 4-aspartylphosphate intermediate of the active site. 2 residues coordinate Mg(2+): D726 and D730. Residues 782–801 (KKTIAYTLTKNIAELCPFLV) form a helical membrane-spanning segment. The Lumenal portion of the chain corresponds to 802–811 (YIIVGLPLPI). A helical membrane pass occupies residues 812–832 (GTITILFIDLGTDIIPSIALA). The Cytoplasmic portion of the chain corresponds to 833–852 (YEKVESDIMNRKPRHKKKDR). Residues 853-875 (LVNHQLAIYSYLHIGLMQALGAF) traverse the membrane as a helical segment. At 876-927 (LVYFTVYAQQGFWPTSLIQLRVKWEQDYVNDLEDSYGQQWTRYQRKYLEWTG) the chain is on the lumenal side. Residues 928-947 (YTAFFVGIMVQQIADLIIRK) traverse the membrane as a helical segment. Topologically, residues 948–961 (TRRNSIFQQGLFRN) are cytoplasmic. S952 carries the post-translational modification Phosphoserine; by PKA. The helical transmembrane segment at 962–980 (KVIWVGITSQIIVALILSC) threads the bilayer. Over 981-995 (GLGSITALNFTMLRV) the chain is Lumenal. The helical transmembrane segment at 996-1016 (QYWFVAVPHAILIWVYDEVRK) threads the bilayer. At 1017-1033 (LFLRLYPGSWWDKNMYY) the chain is on the cytoplasmic side.

Belongs to the cation transport ATPase (P-type) (TC 3.A.3) family. Type IIC subfamily. As to quaternary structure, composed of two subunits: alpha (catalytic) and beta. Found in skin, kidney and distal colon.

The protein resides in the membrane. The catalysed reaction is K(+)(out) + ATP + H2O + H(+)(in) = K(+)(in) + ADP + phosphate + 2 H(+)(out). Catalyzes the hydrolysis of ATP coupled with the exchange of H(+) and K(+) ions across the plasma membrane. Responsible for potassium absorption in various tissues. This is Potassium-transporting ATPase alpha chain 2 (ATP12A) from Cavia porcellus (Guinea pig).